The sequence spans 496 residues: Glutamate--tRNA ligase (496 aa).

The 'HIGH' region signature appears at 10–20; the sequence is PSPTGPLHIGG. The 'KMSKS' region motif lies at 251 to 255; sequence KMSKR. Lysine 254 contributes to the ATP binding site.

The protein belongs to the class-I aminoacyl-tRNA synthetase family. Glutamate--tRNA ligase type 1 subfamily. Monomer.

It is found in the cytoplasm. It catalyses the reaction tRNA(Glu) + L-glutamate + ATP = L-glutamyl-tRNA(Glu) + AMP + diphosphate. Its function is as follows. Catalyzes the attachment of glutamate to tRNA(Glu) in a two-step reaction: glutamate is first activated by ATP to form Glu-AMP and then transferred to the acceptor end of tRNA(Glu). This Heliobacterium modesticaldum (strain ATCC 51547 / Ice1) protein is Glutamate--tRNA ligase.